Here is a 296-residue protein sequence, read N- to C-terminus: ATP phosphoribosyltransferase (296 aa).

The protein belongs to the ATP phosphoribosyltransferase family. Long subfamily. Mg(2+) is required as a cofactor.

Its subcellular location is the cytoplasm. It catalyses the reaction 1-(5-phospho-beta-D-ribosyl)-ATP + diphosphate = 5-phospho-alpha-D-ribose 1-diphosphate + ATP. It functions in the pathway amino-acid biosynthesis; L-histidine biosynthesis; L-histidine from 5-phospho-alpha-D-ribose 1-diphosphate: step 1/9. Feedback inhibited by histidine. Its function is as follows. Catalyzes the condensation of ATP and 5-phosphoribose 1-diphosphate to form N'-(5'-phosphoribosyl)-ATP (PR-ATP). Has a crucial role in the pathway because the rate of histidine biosynthesis seems to be controlled primarily by regulation of HisG enzymatic activity. This Halorubrum lacusprofundi (strain ATCC 49239 / DSM 5036 / JCM 8891 / ACAM 34) protein is ATP phosphoribosyltransferase.